Here is a 470-residue protein sequence, read N- to C-terminus: Acetyl-CoA decarbonylase/synthase complex subunit gamma 1 (470 aa).

Residues 1–60 (MKINSPLEAYKYLPQTNCGECGQPTCMAFASTLIDRSGKTTDCPPLIKEKKFAKKLAELD) form the 4Fe-4S domain. [4Fe-4S] cluster is bound by residues cysteine 18, cysteine 21, cysteine 26, and cysteine 43.

Heterodimer of delta and gamma chains. The ACDS complex is made up of alpha, epsilon, beta, gamma and delta chains with a probable stoichiometry of (alpha(2)epsilon(2))(4)-beta(8)-(gamma(1)delta(1))(8). Corrinoid is required as a cofactor. [4Fe-4S] cluster serves as cofactor.

The catalysed reaction is 5,6,7,8-tetrahydrosarcinapterin + methyl-Co(III)-[corrinoid Fe-S protein] = 5-methyltetrahydrosarcinapterin + Co(I)-[corrinoid Fe-S protein] + H(+). The protein operates within one-carbon metabolism; methanogenesis from acetate. In terms of biological role, part of a complex that catalyzes the reversible cleavage of acetyl-CoA, allowing growth on acetate as sole source of carbon and energy. The protein is Acetyl-CoA decarbonylase/synthase complex subunit gamma 1 of Methanosarcina mazei (strain ATCC BAA-159 / DSM 3647 / Goe1 / Go1 / JCM 11833 / OCM 88) (Methanosarcina frisia).